A 381-amino-acid polypeptide reads, in one-letter code: Queuine tRNA-ribosyltransferase (381 aa).

The active-site Proton acceptor is the D92. Substrate contacts are provided by residues D92 to F96, D146, Q190, and G217. An RNA binding region spans residues G248–D254. The active-site Nucleophile is D267. The segment at T272–R276 is RNA binding; important for wobble base 34 recognition. Residues C305, C307, C310, and H337 each contribute to the Zn(2+) site.

Belongs to the queuine tRNA-ribosyltransferase family. Homodimer. Within each dimer, one monomer is responsible for RNA recognition and catalysis, while the other monomer binds to the replacement base PreQ1. The cofactor is Zn(2+).

The catalysed reaction is 7-aminomethyl-7-carbaguanine + guanosine(34) in tRNA = 7-aminomethyl-7-carbaguanosine(34) in tRNA + guanine. It functions in the pathway tRNA modification; tRNA-queuosine biosynthesis. Functionally, catalyzes the base-exchange of a guanine (G) residue with the queuine precursor 7-aminomethyl-7-deazaguanine (PreQ1) at position 34 (anticodon wobble position) in tRNAs with GU(N) anticodons (tRNA-Asp, -Asn, -His and -Tyr). Catalysis occurs through a double-displacement mechanism. The nucleophile active site attacks the C1' of nucleotide 34 to detach the guanine base from the RNA, forming a covalent enzyme-RNA intermediate. The proton acceptor active site deprotonates the incoming PreQ1, allowing a nucleophilic attack on the C1' of the ribose to form the product. After dissociation, two additional enzymatic reactions on the tRNA convert PreQ1 to queuine (Q), resulting in the hypermodified nucleoside queuosine (7-(((4,5-cis-dihydroxy-2-cyclopenten-1-yl)amino)methyl)-7-deazaguanosine). This is Queuine tRNA-ribosyltransferase from Xanthomonas campestris pv. campestris (strain B100).